The following is a 918-amino-acid chain: Isoleucine--tRNA ligase (918 aa).

A 'HIGH' region motif is present at residues 59–69; it reads PYANGHLHIGH. Glutamate 570 is a binding site for L-isoleucyl-5'-AMP. The 'KMSKS' region motif lies at 611 to 615; sequence KMSKS. Lysine 614 is an ATP binding site. Cysteine 893, cysteine 896, cysteine 908, and cysteine 911 together coordinate Zn(2+).

Belongs to the class-I aminoacyl-tRNA synthetase family. IleS type 1 subfamily. In terms of assembly, monomer. Zn(2+) serves as cofactor.

It is found in the cytoplasm. The enzyme catalyses tRNA(Ile) + L-isoleucine + ATP = L-isoleucyl-tRNA(Ile) + AMP + diphosphate. Its function is as follows. Catalyzes the attachment of isoleucine to tRNA(Ile). As IleRS can inadvertently accommodate and process structurally similar amino acids such as valine, to avoid such errors it has two additional distinct tRNA(Ile)-dependent editing activities. One activity is designated as 'pretransfer' editing and involves the hydrolysis of activated Val-AMP. The other activity is designated 'posttransfer' editing and involves deacylation of mischarged Val-tRNA(Ile). This chain is Isoleucine--tRNA ligase, found in Campylobacter concisus (strain 13826).